The chain runs to 68 residues: Conotoxin Vc7.4 (68 aa).

The signal sequence occupies residues 1–24 (MIRMGFFLTLTVAVLLTSLICTEA). The propeptide occupies 25–45 (VPTDKRGMERLFDHVLLKDQR). 3 cysteine pairs are disulfide-bonded: C47-C55, C50-C60, and C54-C65.

Belongs to the conotoxin U superfamily. Expressed by the venom duct.

Its subcellular location is the secreted. The protein is Conotoxin Vc7.4 of Conus victoriae (Queen Victoria cone).